A 303-amino-acid chain; its full sequence is GMP synthase [glutamine-hydrolyzing] subunit B (303 aa).

The GMPS ATP-PPase domain maps to Met1–Arg183. Ser28–Ser34 is an ATP binding site.

In terms of assembly, heterodimer composed of a glutamine amidotransferase subunit (A) and a GMP-binding subunit (B).

It carries out the reaction XMP + L-glutamine + ATP + H2O = GMP + L-glutamate + AMP + diphosphate + 2 H(+). The protein operates within purine metabolism; GMP biosynthesis; GMP from XMP (L-Gln route): step 1/1. Its function is as follows. Catalyzes the synthesis of GMP from XMP. This chain is GMP synthase [glutamine-hydrolyzing] subunit B (guaAB), found in Archaeoglobus fulgidus (strain ATCC 49558 / DSM 4304 / JCM 9628 / NBRC 100126 / VC-16).